The sequence spans 459 residues: Phosphoglucosamine mutase (459 aa).

Catalysis depends on Ser-102, which acts as the Phosphoserine intermediate. Mg(2+) is bound by residues Ser-102, Asp-243, Asp-245, and Asp-247. Ser-102 carries the post-translational modification Phosphoserine.

The protein belongs to the phosphohexose mutase family. Requires Mg(2+) as cofactor. Activated by phosphorylation.

It carries out the reaction alpha-D-glucosamine 1-phosphate = D-glucosamine 6-phosphate. Its function is as follows. Catalyzes the conversion of glucosamine-6-phosphate to glucosamine-1-phosphate. This Bartonella quintana (strain Toulouse) (Rochalimaea quintana) protein is Phosphoglucosamine mutase.